The following is a 464-amino-acid chain: Protein FAM90A13 (464 aa).

Disordered stretches follow at residues 1–42 (MMAR…DPRL), 69–389 (VPAT…HDGA), and 411–437 (APSFHSPEKPGAFLAQSPHVSEKSEAP). Composition is skewed to basic and acidic residues over residues 74–89 (GKKEGKENLKPWKPRG) and 97–114 (NKDKGEKEERPRQQDPQR). Residues 180-197 (LASLSPLRKASLSSSSSL) are compositionally biased toward low complexity.

The protein belongs to the FAM90 family.

This chain is Protein FAM90A13, found in Homo sapiens (Human).